The chain runs to 111 residues: Protein BEX5 (111 aa).

Residues 1–12 are compositionally biased toward basic and acidic residues; the sequence is MENVPKENKVVE. Positions 1–37 are disordered; that stretch reads MENVPKENKVVEKAPVQNEAPALGGGEYQEPGGNVKG. The his cluster stretch occupies residues 100–104; that stretch reads HHDHH. Residue Cys-108 participates in Zn(2+) binding.

It belongs to the BEX family. Post-translationally, ubiquitinated. Degraded by the proteasome.

It localises to the cytoplasm. In Homo sapiens (Human), this protein is Protein BEX5 (BEX5).